A 415-amino-acid polypeptide reads, in one-letter code: MERYRVGGAVRDRLLGRPVDEVDWVVVGATPEAMEAAGYRPVGKDFPVFLHPQTGEEHALARTERKTAVGYHGFEFYAAPEVTLEQDLARRDLTINAMAEDAGGRLIDPFGGQVDLQARQLRHVTDAFAEDPVRILRLARFAARFADDGFVVADETMALCQRMVAAGEVDALVPERVWQELARGLMEPTPRRMIEVLRQAGALARLLPEVDALFGVPQSPAHHPEGDAGTHTLMALDAAAAVDASLEARFAVLLHDVGKALTPAEALPRHPGHEEAGVDGARRVSERLKAPRACRDLAVLVTRWHMHAHRALELRPGTVVELFEGLDLFRRPERLEPFLHACLADDRGRGGREASDWPAGDFLRAAFEACRGVSARSFVEQGLRGPEVGEAVREARCRAVAQVPRPDAGAARDGA.

Positions 8 and 11 each coordinate ATP. Positions 8 and 11 each coordinate CTP. Residues Glu21 and Asp23 each coordinate Mg(2+). ATP contacts are provided by Arg91, Arg137, and Arg140. CTP contacts are provided by Arg91, Arg137, and Arg140. One can recognise an HD domain in the interval 228–329; sequence AGTHTLMALD…VELFEGLDLF (102 aa).

It belongs to the tRNA nucleotidyltransferase/poly(A) polymerase family. Bacterial CCA-adding enzyme type 1 subfamily. As to quaternary structure, monomer. Can also form homodimers and oligomers. It depends on Mg(2+) as a cofactor. Requires Ni(2+) as cofactor.

It catalyses the reaction a tRNA precursor + 2 CTP + ATP = a tRNA with a 3' CCA end + 3 diphosphate. The catalysed reaction is a tRNA with a 3' CCA end + 2 CTP + ATP = a tRNA with a 3' CCACCA end + 3 diphosphate. Functionally, catalyzes the addition and repair of the essential 3'-terminal CCA sequence in tRNAs without using a nucleic acid template. Adds these three nucleotides in the order of C, C, and A to the tRNA nucleotide-73, using CTP and ATP as substrates and producing inorganic pyrophosphate. tRNA 3'-terminal CCA addition is required both for tRNA processing and repair. Also involved in tRNA surveillance by mediating tandem CCA addition to generate a CCACCA at the 3' terminus of unstable tRNAs. While stable tRNAs receive only 3'-terminal CCA, unstable tRNAs are marked with CCACCA and rapidly degraded. The chain is Multifunctional CCA protein from Halorhodospira halophila (strain DSM 244 / SL1) (Ectothiorhodospira halophila (strain DSM 244 / SL1)).